Here is a 479-residue protein sequence, read N- to C-terminus: Sulfate adenylyltransferase subunit 1 (479 aa).

The tr-type G domain occupies 25-239 (KSLLRFLTCG…EVLETVDIQR (215 aa)). Residues 34-41 (GSVDDGKS) form a G1 region. 34–41 (GSVDDGKS) is a binding site for GTP. The interval 92–96 (GITID) is G2. The tract at residues 113–116 (DTPG) is G3. GTP is bound by residues 113–117 (DTPGH) and 168–171 (NKMD). The G4 stretch occupies residues 168 to 171 (NKMD). Positions 206-208 (SAL) are G5.

It belongs to the TRAFAC class translation factor GTPase superfamily. Classic translation factor GTPase family. CysN/NodQ subfamily. In terms of assembly, heterodimer composed of CysD, the smaller subunit, and CysN.

It carries out the reaction sulfate + ATP + H(+) = adenosine 5'-phosphosulfate + diphosphate. It functions in the pathway sulfur metabolism; hydrogen sulfide biosynthesis; sulfite from sulfate: step 1/3. In terms of biological role, with CysD forms the ATP sulfurylase (ATPS) that catalyzes the adenylation of sulfate producing adenosine 5'-phosphosulfate (APS) and diphosphate, the first enzymatic step in sulfur assimilation pathway. APS synthesis involves the formation of a high-energy phosphoric-sulfuric acid anhydride bond driven by GTP hydrolysis by CysN coupled to ATP hydrolysis by CysD. The protein is Sulfate adenylyltransferase subunit 1 of Salmonella typhi.